The following is a 235-amino-acid chain: uncharacterized protein (235 aa).

3 helical membrane passes run 41–61 (IFWHPLYLAVFGLVFMGIYRL), 71–91 (LRTFVLLILVSAVFLTLIEFP), and 129–149 (IGIIGILPANAPGAYQNTPTI).

Its subcellular location is the membrane. This is an uncharacterized protein from Schizosaccharomyces pombe (strain 972 / ATCC 24843) (Fission yeast).